A 160-amino-acid polypeptide reads, in one-letter code: 6,7-dimethyl-8-ribityllumazine synthase (160 aa).

5-amino-6-(D-ribitylamino)uracil contacts are provided by residues Phe23, 61–63 (SFE), and 85–87 (AVI). 90–91 (DT) is a (2S)-2-hydroxy-3-oxobutyl phosphate binding site. His93 (proton donor) is an active-site residue. 5-amino-6-(D-ribitylamino)uracil is bound at residue Phe118. Arg132 contributes to the (2S)-2-hydroxy-3-oxobutyl phosphate binding site.

This sequence belongs to the DMRL synthase family.

The enzyme catalyses (2S)-2-hydroxy-3-oxobutyl phosphate + 5-amino-6-(D-ribitylamino)uracil = 6,7-dimethyl-8-(1-D-ribityl)lumazine + phosphate + 2 H2O + H(+). It functions in the pathway cofactor biosynthesis; riboflavin biosynthesis; riboflavin from 2-hydroxy-3-oxobutyl phosphate and 5-amino-6-(D-ribitylamino)uracil: step 1/2. In terms of biological role, catalyzes the formation of 6,7-dimethyl-8-ribityllumazine by condensation of 5-amino-6-(D-ribitylamino)uracil with 3,4-dihydroxy-2-butanone 4-phosphate. This is the penultimate step in the biosynthesis of riboflavin. The chain is 6,7-dimethyl-8-ribityllumazine synthase from Synechococcus sp. (strain CC9605).